A 222-amino-acid chain; its full sequence is Pre-mRNA cleavage factor Im 25 kDa subunit 1 (222 aa).

A Nudix hydrolase domain is found at 67-194 (GLRTCVEAVL…KLLAVPLCQL (128 aa)). Residues 94–96 (SIF) form an interaction with RNA region. Positions 101-122 (GRLRPGESDIEGLKRKLASKLS) match the Nudix box motif.

This sequence belongs to the Nudix hydrolase family. CPSF5 subfamily. Homodimer. Component of the cleavage factor Im (CFIm) complex. Forms a complex with cleavage and polyadenylation specificity factor (CPSF) subunits FIPS5.

It is found in the nucleus. Component of the cleavage factor Im (CFIm) complex that plays a key role in pre-mRNA 3'-processing. Involved in association with CPSF6 or CPSF7 in pre-MRNA 3'-end poly(A) site cleavage and poly(A) addition. NUDT21/CPSF5 binds to cleavage and polyadenylation RNA substrates. The homodimer mediates simultaneous sequence-specific recognition of two 5'-UGUA-3' elements within the pre-mRNA. Binds to, but does not hydrolyze mono- and di-adenosine nucleotides. May have a role in mRNA export. The polypeptide is Pre-mRNA cleavage factor Im 25 kDa subunit 1 (Arabidopsis thaliana (Mouse-ear cress)).